The following is a 344-amino-acid chain: Succinylglutamate desuccinylase (344 aa).

Zn(2+)-binding residues include H63, E66, and H160. E224 is an active-site residue.

Belongs to the AspA/AstE family. Succinylglutamate desuccinylase subfamily. Requires Zn(2+) as cofactor.

It catalyses the reaction N-succinyl-L-glutamate + H2O = L-glutamate + succinate. It participates in amino-acid degradation; L-arginine degradation via AST pathway; L-glutamate and succinate from L-arginine: step 5/5. Transforms N(2)-succinylglutamate into succinate and glutamate. The chain is Succinylglutamate desuccinylase from Shewanella putrefaciens (strain CN-32 / ATCC BAA-453).